Here is a 198-residue protein sequence, read N- to C-terminus: Translation initiation factor IF-3 (198 aa).

The segment at serine 168–glutamate 198 is disordered. Residues lysine 178 to glutamate 198 are compositionally biased toward basic and acidic residues.

It belongs to the IF-3 family. Monomer.

It localises to the cytoplasm. In terms of biological role, IF-3 binds to the 30S ribosomal subunit and shifts the equilibrium between 70S ribosomes and their 50S and 30S subunits in favor of the free subunits, thus enhancing the availability of 30S subunits on which protein synthesis initiation begins. This Phocaeicola vulgatus (strain ATCC 8482 / DSM 1447 / JCM 5826 / CCUG 4940 / NBRC 14291 / NCTC 11154) (Bacteroides vulgatus) protein is Translation initiation factor IF-3.